Reading from the N-terminus, the 649-residue chain is 1-deoxy-D-xylulose-5-phosphate synthase (649 aa).

Thiamine diphosphate is bound by residues His74 and 115–117 (GHA). Asp146 contacts Mg(2+). Residues 147-148 (GA), Asn176, Tyr292, and Glu375 each bind thiamine diphosphate. Asn176 contacts Mg(2+).

It belongs to the transketolase family. DXPS subfamily. Homodimer. Mg(2+) is required as a cofactor. Requires thiamine diphosphate as cofactor.

It carries out the reaction D-glyceraldehyde 3-phosphate + pyruvate + H(+) = 1-deoxy-D-xylulose 5-phosphate + CO2. The protein operates within metabolic intermediate biosynthesis; 1-deoxy-D-xylulose 5-phosphate biosynthesis; 1-deoxy-D-xylulose 5-phosphate from D-glyceraldehyde 3-phosphate and pyruvate: step 1/1. In terms of biological role, catalyzes the acyloin condensation reaction between C atoms 2 and 3 of pyruvate and glyceraldehyde 3-phosphate to yield 1-deoxy-D-xylulose-5-phosphate (DXP). This Synechococcus sp. (strain JA-3-3Ab) (Cyanobacteria bacterium Yellowstone A-Prime) protein is 1-deoxy-D-xylulose-5-phosphate synthase.